The following is a 414-amino-acid chain: Serine hydroxymethyltransferase (414 aa).

Residues leucine 121 and 125–127 (GHL) each bind (6S)-5,6,7,8-tetrahydrofolate. Lysine 229 carries the N6-(pyridoxal phosphate)lysine modification.

The protein belongs to the SHMT family. In terms of assembly, homodimer. Pyridoxal 5'-phosphate serves as cofactor.

The protein resides in the cytoplasm. It carries out the reaction (6R)-5,10-methylene-5,6,7,8-tetrahydrofolate + glycine + H2O = (6S)-5,6,7,8-tetrahydrofolate + L-serine. It participates in one-carbon metabolism; tetrahydrofolate interconversion. The protein operates within amino-acid biosynthesis; glycine biosynthesis; glycine from L-serine: step 1/1. Functionally, catalyzes the reversible interconversion of serine and glycine with tetrahydrofolate (THF) serving as the one-carbon carrier. This reaction serves as the major source of one-carbon groups required for the biosynthesis of purines, thymidylate, methionine, and other important biomolecules. Also exhibits THF-independent aldolase activity toward beta-hydroxyamino acids, producing glycine and aldehydes, via a retro-aldol mechanism. This is Serine hydroxymethyltransferase from Variovorax paradoxus (strain S110).